Consider the following 416-residue polypeptide: Iron-regulated transcriptional activator AFT2 (416 aa).

Aspartate 53 provides a ligand contact to Zn(2+). Arginine 54, histidine 55, lysine 58, isoleucine 74, glutamate 75, arginine 76, serine 77, aspartate 78, and lysine 81 together coordinate DNA. Histidine 55 is a binding site for Zn(2+). Cysteine 86 is a Zn(2+) binding site. DNA is bound at residue serine 88. Cysteine 109 provides a ligand contact to Zn(2+). Positions 119 and 120 each coordinate DNA. Positions 133 and 135 each coordinate Zn(2+). DNA-binding residues include glutamine 157 and asparagine 159. The CDC [2Fe-2S] cluster binding motif signature appears at 187 to 189 (CDC).

As to quaternary structure, homodimer. Dimerization decreases the DNA-binding activity.

It is found in the nucleus. Dimerization via the binding of Fe(2+) or a [2Fe-2S] cluster decreases the DNA-binding activity. Functionally, transcription factor required for iron homeostasis and resistance to oxidative stress. With AFT1, activates the gene expression in response to low-iron conditions, also called iron regulon. Recognizes the consensus iron-responsive element (Fe-RE) sequence 5'-CACCC-3' in the promoters of target genes. The transcription activation by AFT1 and AFT2 depends on the mitochondrial iron-sulfur protein biosynthesis pathway. In high iron condition, the presence of iron leads to dimerization, which in turn leads to a decrease in DNA affinity. The chain is Iron-regulated transcriptional activator AFT2 from Saccharomyces cerevisiae (strain ATCC 204508 / S288c) (Baker's yeast).